Consider the following 375-residue polypeptide: All-trans-retinol dehydrogenase [NAD(+)] ADH1B (375 aa).

Ser2 bears the N-acetylserine mark. Position 23 is a phosphoserine (Ser23). The residue at position 35 (Tyr35) is a Phosphotyrosine. The Zn(2+) site is built by Cys47, His68, Cys98, Cys101, Cys104, Cys112, and Cys175. NAD(+) contacts are provided by residues 200–205, Asp224, Lys229, 293–295, and Arg370; these read GLGGVG and VGV.

This sequence belongs to the zinc-containing alcohol dehydrogenase family. As to quaternary structure, homodimer or heterodimer of closely related subunits. Zn(2+) serves as cofactor.

It localises to the cytoplasm. The catalysed reaction is all-trans-retinol + NAD(+) = all-trans-retinal + NADH + H(+). It carries out the reaction all-trans-4-hydroxyretinol + NAD(+) = all-trans-4-hydroxyretinal + NADH + H(+). The enzyme catalyses all-trans-4-oxoretinol + NAD(+) = all-trans-4-oxoretinal + NADH + H(+). Catalyzes the NAD-dependent oxidation of all-trans-retinol and its derivatives such as all-trans-4-hydroxyretinol and may participate in retinoid metabolism. In vitro can also catalyze the NADH-dependent reduction of all-trans-retinal and its derivatives such as all-trans-4-oxoretinal. Catalyzes in the oxidative direction with higher efficiency. Has the same affinity for all-trans-4-hydroxyretinol and all-trans-4-oxoretinal. This chain is All-trans-retinol dehydrogenase [NAD(+)] ADH1B, found in Pan troglodytes (Chimpanzee).